Consider the following 1351-residue polypeptide: Alpha-latrotoxin-Lh1a (1351 aa).

A signal peptide spans 1–7 (SLVRMRR). The segment at 4 to 7 (RMRR) is furin-like endopeptidase recognition region. The segment at 226-245 (VLYALLYGTQTYVSVMFFLL) is helix H8 is the probable transmembrane region of the tetrameric pore inserted in the target cell membrane. Cys401 and Cys1054 are joined by a disulfide. ANK repeat units follow at residues 446-477 (LYNT…ATFE), 478-509 (QGRT…ELNQ), 513-542 (KGYT…SINS), 547-577 (FLQT…NINE), 581-610 (DGFT…DLNA), 614-644 (KGLT…DVNA), 648-678 (NNMT…NADV), 683-711 (GLLS…NVNV), 717-746 (GGIT…NIEQ), 750-779 (EKYT…NFEA), 783-812 (SGAT…NWRD), 816-846 (NGQM…VLDI), 850-879 (NSDT…DINT), 883-912 (TGHA…NVYI), 916-945 (DGIN…KFEW), 959-991 (EECA…GNFA), 992-1019 (ICGP…DLNV), 1023-1052 (KPDT…KVNH), 1056-1085 (NGMT…DFRR), 1089-1119 (LGAT…DIDI), 1125-1154 (DKET…DMTI), and 1158-1187 (YDKT…KFRR). Residues 1184-1187 (KFRR) are furin-like endopeptidase recognition region. Residues 1188 to 1351 (EYKSSYGEHS…LGSVIMNSHS (164 aa)) constitute a propeptide that is removed on maturation.

The protein belongs to the cationic peptide 01 (latrotoxin) family. 03 (alpha-latrotoxin) subfamily. As to quaternary structure, homotetramer in membranes. In terms of processing, processed by furin-like proteases at both the N- and C-termini. In terms of tissue distribution, expressed in venom gland, cephalothorax, and abdomen tissues from both males and females.

The protein resides in the secreted. It is found in the target cell membrane. In terms of biological role, presynaptic neurotoxin that causes massive release of neurotransmitters from vertebrate (but not invertebrate) nerve terminals and endocrine cells via a complex mechanism involving activation of receptor(s) and toxin insertion into the plasma membrane with subsequent pore formation. Binds to neurexin-1-alpha (NRXN1) in a calcium dependent manner, adhesion G protein-coupled receptor L1 (ADGRL1, also termed latrophilin-1 and calcium-independent receptor of latrotoxin (CIRL)), and receptor-type tyrosine-protein phosphatase S (PTPRS), also termed PTP sigma. NRXN1 and PTPRS are suggested to provide a platform for binding and subsequent pore formation events. In contrast, binding to ADGRL1 does not involve oligomerization and channel formation, but direct downstream stimulation of the synaptic fusion machinery. Induces rapid muscle contracture and loss of twitch tension when added to the isolated and indirectly stimulated chick biventer cervicis nerve-muscle preparation. This is Alpha-latrotoxin-Lh1a from Latrodectus hasselti (Redback spider).